A 326-amino-acid polypeptide reads, in one-letter code: tRNA-modifying protein YgfZ (326 aa).

Folate contacts are provided by W27 and W189.

The protein belongs to the tRNA-modifying YgfZ family.

Its subcellular location is the cytoplasm. In terms of biological role, folate-binding protein involved in regulating the level of ATP-DnaA and in the modification of some tRNAs. It is probably a key factor in regulatory networks that act via tRNA modification, such as initiation of chromosomal replication. This Shigella dysenteriae serotype 1 (strain Sd197) protein is tRNA-modifying protein YgfZ.